A 456-amino-acid chain; its full sequence is Cysteine--tRNA ligase (456 aa).

Cysteine 28 is a Zn(2+) binding site. A 'HIGH' region motif is present at residues 30–40 (ITVYDHCHLGH). 3 residues coordinate Zn(2+): cysteine 209, histidine 234, and glutamate 238. A 'KMSKS' region motif is present at residues 266 to 270 (KMAKS). Lysine 269 is an ATP binding site.

It belongs to the class-I aminoacyl-tRNA synthetase family. Monomer. The cofactor is Zn(2+).

It is found in the cytoplasm. It carries out the reaction tRNA(Cys) + L-cysteine + ATP = L-cysteinyl-tRNA(Cys) + AMP + diphosphate. This chain is Cysteine--tRNA ligase, found in Legionella pneumophila (strain Corby).